The following is a 305-amino-acid chain: Translation initiation factor eIF2B subunit alpha (305 aa).

It belongs to the eIF-2B alpha/beta/delta subunits family. As to quaternary structure, component of the translation initiation factor 2B (eIF2B) complex which is a heterodecamer of two sets of five different subunits: alpha, beta, gamma, delta and epsilon. Subunits alpha, beta and delta comprise a regulatory subcomplex and subunits epsilon and gamma comprise a catalytic subcomplex. Within the complex, the hexameric regulatory complex resides at the center, with the two heterodimeric catalytic subcomplexes bound on opposite sides.

It is found in the cytoplasm. The protein resides in the cytosol. With respect to regulation, activated by the chemical integrated stress response (ISR) inhibitor ISRIB which stimulates guanine nucleotide exchange factor activity for both phosphorylated and unphosphorylated eIF2. Its function is as follows. Acts as a component of the translation initiation factor 2B (eIF2B) complex, which catalyzes the exchange of GDP for GTP on eukaryotic initiation factor 2 (eIF2) gamma subunit. Its guanine nucleotide exchange factor activity is repressed when bound to eIF2 complex phosphorylated on the alpha subunit, thereby limiting the amount of methionyl-initiator methionine tRNA available to the ribosome and consequently global translation is repressed. The protein is Translation initiation factor eIF2B subunit alpha (EIF2B1) of Bos taurus (Bovine).